Reading from the N-terminus, the 283-residue chain is Polyamine aminopropyltransferase (283 aa).

A PABS domain is found at 2 to 237 (ELWYTDQHTK…GHWLFGFASK (236 aa)). Gln-31 is an S-methyl-5'-thioadenosine binding site. Residues His-62 and Asp-86 each contribute to the spermidine site. S-methyl-5'-thioadenosine is bound by residues Glu-106 and 137-138 (EG). The active-site Proton acceptor is Asp-155. Residue 155–158 (DCAD) participates in spermidine binding. Position 162 (Pro-162) interacts with S-methyl-5'-thioadenosine.

It belongs to the spermidine/spermine synthase family. Homodimer or homotetramer.

It localises to the cytoplasm. The catalysed reaction is S-adenosyl 3-(methylsulfanyl)propylamine + putrescine = S-methyl-5'-thioadenosine + spermidine + H(+). It participates in amine and polyamine biosynthesis; spermidine biosynthesis; spermidine from putrescine: step 1/1. Catalyzes the irreversible transfer of a propylamine group from the amino donor S-adenosylmethioninamine (decarboxy-AdoMet) to putrescine (1,4-diaminobutane) to yield spermidine. The sequence is that of Polyamine aminopropyltransferase from Lachnoclostridium phytofermentans (strain ATCC 700394 / DSM 18823 / ISDg) (Clostridium phytofermentans).